A 320-amino-acid polypeptide reads, in one-letter code: Aspartate carbamoyltransferase catalytic subunit (320 aa).

2 residues coordinate carbamoyl phosphate: Arg-68 and Thr-69. Residue Lys-96 participates in L-aspartate binding. Residues Arg-118, His-148, and Gln-151 each coordinate carbamoyl phosphate. L-aspartate is bound by residues Arg-181 and Arg-236. Residues Gly-277 and Pro-278 each contribute to the carbamoyl phosphate site.

Belongs to the aspartate/ornithine carbamoyltransferase superfamily. ATCase family. In terms of assembly, heterododecamer (2C3:3R2) of six catalytic PyrB chains organized as two trimers (C3), and six regulatory PyrI chains organized as three dimers (R2).

It carries out the reaction carbamoyl phosphate + L-aspartate = N-carbamoyl-L-aspartate + phosphate + H(+). It functions in the pathway pyrimidine metabolism; UMP biosynthesis via de novo pathway; (S)-dihydroorotate from bicarbonate: step 2/3. Its function is as follows. Catalyzes the condensation of carbamoyl phosphate and aspartate to form carbamoyl aspartate and inorganic phosphate, the committed step in the de novo pyrimidine nucleotide biosynthesis pathway. The chain is Aspartate carbamoyltransferase catalytic subunit from Methylibium petroleiphilum (strain ATCC BAA-1232 / LMG 22953 / PM1).